The primary structure comprises 338 residues: MLSLNEIKFPVHWNLKPNPTSYVDHVYQEGLEFGVWRPDNKRDIVAHNNVVSLSKFFWPTVDFERLVMGGELMLWFFTFDDALDSGIYDDTKSLEIVRRMSAVFMEGTLCDDASGPEKVGYRLRQKCLEMCGKRRRDTFNRFITSCVQWIDSIIPFNKVKDGGSPHIELYSFLRKINIGAYPCVTLSEVFIDHYLDHSIWSSPRWVKMNENIAIVVTLINDLVSYEKEVNDNAGALNPLYFFQQQRKFNLPDSYNHMVNLIHFFVQDYLANEESFLKSLEPFENEKQQQDIYFMLDHLHFLISGSRMWSMQTPRYCSPTSPFIEMRPSFNQGNLMSKL.

A DDxx(x)D/E motif motif is present at residues 80–85 (DDALDS). The NDxxSxxxD/E motif motif lies at 220-228 (NDLVSYEKE).

This sequence belongs to the terpene synthase family.

It catalyses the reaction (2E,6E)-farnesyl diphosphate = (2S,3R,6S,9S)-(-)-protoillud-7-ene + diphosphate. Its function is as follows. Terpene synthase that converts its substrate farnesyl diphosphate (FPP) into the sesquiterpene protoillud-7-ene. The sequence is that of Terpene synthase 1 from Cavenderia fasciculata (Slime mold).